The chain runs to 435 residues: Fibrous sheath-interacting protein 1 (435 aa).

2 disordered regions span residues 1-109 (MPMD…DPKL) and 354-393 (SQSHKGDMECDANEERNTEPTPGEKILRDRKEQRDRESRL). The span at 18–32 (SSSRSRPGSRSSNGS) shows a compositional bias: low complexity. A compositionally biased stretch (polar residues) spans 50 to 63 (KLNSGQEGHTSNSG). Positions 64–87 (VEERRNSNDAKWADDSKTKPAKES) are enriched in basic and acidic residues. Phosphoserine is present on residues serine 87 and serine 88. Positions 108-154 (KLEETNAVLQNAIRKMHRLDKLLAKKQCREKEVKKQGLEMRVKLWEE) form a coiled coil. Basic and acidic residues-rich tracts occupy residues 355 to 371 (QSHKGDMECDANEERNT) and 378 to 393 (KILRDRKEQRDRESRL).

It belongs to the FSIP1 family. In terms of assembly, may interact with AKAP4. Detected in male germ cells and testis.

The polypeptide is Fibrous sheath-interacting protein 1 (Fsip1) (Mus musculus (Mouse)).